Here is a 604-residue protein sequence, read N- to C-terminus: 3-hydroxy-3-methylglutaryl-coenzyme A reductase 2 (604 aa).

The next 2 membrane-spanning stretches (helical) occupy residues 47–67 and 91–111; these read LPLY…MYFL and AIVS…IGFV. Positions 112 to 188 are linker; it reads QTFVARGNND…APLVTPAASE (77 aa). N-linked (GlcNAc...) asparagine glycosylation occurs at Asn120. The tract at residues 189–604 is catalytic; sequence EDEEIIKSVV…STKDVTKASS (416 aa). Catalysis depends on Glu283, which acts as the Charge relay system. Asn347 is a glycosylation site (N-linked (GlcNAc...) asparagine). Lys415 acts as the Charge relay system in catalysis. A glycan (N-linked (GlcNAc...) asparagine) is linked at Asn460. The active-site Charge relay system is Asp491. The Proton donor role is filled by His589. N-linked (GlcNAc...) asparagine glycosylation is present at Asn593.

The protein belongs to the HMG-CoA reductase family.

It localises to the endoplasmic reticulum membrane. The enzyme catalyses (R)-mevalonate + 2 NADP(+) + CoA = (3S)-3-hydroxy-3-methylglutaryl-CoA + 2 NADPH + 2 H(+). It functions in the pathway metabolic intermediate biosynthesis; (R)-mevalonate biosynthesis; (R)-mevalonate from acetyl-CoA: step 3/3. Functionally, catalyzes the synthesis of mevalonate. The specific precursor of all isoprenoid compounds present in plants. The polypeptide is 3-hydroxy-3-methylglutaryl-coenzyme A reductase 2 (HMGR2) (Capsicum annuum (Capsicum pepper)).